The chain runs to 279 residues: Hydroxyethylthiazole kinase (279 aa).

Residue M58 coordinates substrate. 2 residues coordinate ATP: K134 and T180. G207 lines the substrate pocket.

Belongs to the Thz kinase family. Requires Mg(2+) as cofactor.

It catalyses the reaction 5-(2-hydroxyethyl)-4-methylthiazole + ATP = 4-methyl-5-(2-phosphooxyethyl)-thiazole + ADP + H(+). The protein operates within cofactor biosynthesis; thiamine diphosphate biosynthesis; 4-methyl-5-(2-phosphoethyl)-thiazole from 5-(2-hydroxyethyl)-4-methylthiazole: step 1/1. Functionally, catalyzes the phosphorylation of the hydroxyl group of 4-methyl-5-beta-hydroxyethylthiazole (THZ). The chain is Hydroxyethylthiazole kinase from Methanoculleus marisnigri (strain ATCC 35101 / DSM 1498 / JR1).